A 98-amino-acid chain; its full sequence is Probable sodium channel toxin Ts27 (98 aa).

The first 22 residues, 1–22, serve as a signal peptide directing secretion; the sequence is MYNMVSLFIVAVLLLTYANVEG. Intrachain disulfides connect cysteine 36–cysteine 88, cysteine 40–cysteine 63, cysteine 49–cysteine 68, and cysteine 53–cysteine 70.

The protein belongs to the long (4 C-C) scorpion toxin superfamily. Sodium channel inhibitor family. Expressed by the venom gland.

Its subcellular location is the secreted. Functionally, probable sodium channel toxin. The polypeptide is Probable sodium channel toxin Ts27 (Tityus serrulatus (Brazilian scorpion)).